The sequence spans 176 residues: Large ribosomal subunit protein eL20 (176 aa).

This sequence belongs to the eukaryotic ribosomal protein eL20 family. As to quaternary structure, component of the large ribosomal subunit.

It localises to the cytoplasm. Component of the large ribosomal subunit. The ribosome is a large ribonucleoprotein complex responsible for the synthesis of proteins in the cell. The sequence is that of Large ribosomal subunit protein eL20 (rpl18a) from Ictalurus punctatus (Channel catfish).